Consider the following 193-residue polypeptide: Thymidine kinase (193 aa).

Residues 15-22 and 87-90 each bind ATP; these read GCMYSGKT and DELH. Glutamate 88 (proton acceptor) is an active-site residue. The Zn(2+) site is built by cysteine 147, cysteine 150, cysteine 185, and cysteine 188.

It belongs to the thymidine kinase family. In terms of assembly, homotetramer.

It is found in the cytoplasm. The enzyme catalyses thymidine + ATP = dTMP + ADP + H(+). The polypeptide is Thymidine kinase (Chloroflexus aurantiacus (strain ATCC 29366 / DSM 635 / J-10-fl)).